We begin with the raw amino-acid sequence, 788 residues long: 5-methyltetrahydropteroyltriglutamate--homocysteine methyltransferase (788 aa).

5-methyltetrahydropteroyltri-L-glutamate-binding positions include 24 to 27 (RELK) and Lys-140. Residues 463–465 (IGS) and Glu-516 contribute to the L-homocysteine site. L-methionine-binding positions include 463–465 (IGS) and Glu-516. 5-methyltetrahydropteroyltri-L-glutamate contacts are provided by residues 547–548 (RC) and Trp-593. Asp-631 provides a ligand contact to L-homocysteine. Asp-631 serves as a coordination point for L-methionine. A 5-methyltetrahydropteroyltri-L-glutamate-binding site is contributed by Glu-637. The Zn(2+) site is built by His-673, Cys-675, and Glu-697. Catalysis depends on His-726, which acts as the Proton donor. Position 758 (Cys-758) interacts with Zn(2+).

Belongs to the vitamin-B12 independent methionine synthase family. The cofactor is Zn(2+).

It catalyses the reaction 5-methyltetrahydropteroyltri-L-glutamate + L-homocysteine = tetrahydropteroyltri-L-glutamate + L-methionine. It participates in amino-acid biosynthesis; L-methionine biosynthesis via de novo pathway; L-methionine from L-homocysteine (MetE route): step 1/1. In terms of biological role, catalyzes the transfer of a methyl group from 5-methyltetrahydrofolate to homocysteine resulting in methionine formation. This chain is 5-methyltetrahydropteroyltriglutamate--homocysteine methyltransferase, found in Rhodopseudomonas palustris (strain TIE-1).